We begin with the raw amino-acid sequence, 719 residues long: Protein borderless (719 aa).

An N-terminal signal peptide occupies residues 1-33 (MPAKRSRTFRQSGSALLALLAIILLMNISCTSA). Topologically, residues 34 to 650 (ARDHRRQTNL…IDVPSQRKVR (617 aa)) are extracellular. Ig-like domains are found at residues 40–128 (QTNL…CQVS), 134–241 (PSVR…AFLN), 246–334 (AKVI…PVIS), and 341–429 (PIFS…AELM). Cystine bridges form between cysteine 55–cysteine 125, cysteine 172–cysteine 224, cysteine 267–cysteine 318, and cysteine 363–cysteine 413. Fibronectin type-III domains follow at residues 434–527 (APRA…TLPS) and 555–646 (APWN…VPSQ). Residues 651-671 (ALIIGSSVGVIFLLCALCAFL) form a helical membrane-spanning segment. The Cytoplasmic segment spans residues 672-719 (YVKRSCLRHLFAKDSSASEDEDTAESGDCDSDEQDQRDRDSIKIRQST). Residues 685–719 (DSSASEDEDTAESGDCDSDEQDQRDRDSIKIRQST) form a disordered region. Positions 688–704 (ASEDEDTAESGDCDSDE) are enriched in acidic residues. Over residues 705–719 (QDQRDRDSIKIRQST) the composition is skewed to basic and acidic residues.

The protein belongs to the immunoglobulin superfamily. As to quaternary structure, interacts with tutl. In the visual system, expressed in lamina and medulla (at protein level).

It localises to the cell membrane. Its subcellular location is the cell projection. It is found in the axon. Functionally, in the developing eye, has a role in axonal targeting of the R7 photoreceptor where it functions together with tutl. Probably mediates homotypic cell adhesion; the effect is inhibited by Lar. This Drosophila melanogaster (Fruit fly) protein is Protein borderless.